Reading from the N-terminus, the 431-residue chain is tRNA(Ile)-lysidine synthase (431 aa).

An ATP-binding site is contributed by 25-30 (SGGPDS).

This sequence belongs to the tRNA(Ile)-lysidine synthase family.

Its subcellular location is the cytoplasm. It catalyses the reaction cytidine(34) in tRNA(Ile2) + L-lysine + ATP = lysidine(34) in tRNA(Ile2) + AMP + diphosphate + H(+). Its function is as follows. Ligates lysine onto the cytidine present at position 34 of the AUA codon-specific tRNA(Ile) that contains the anticodon CAU, in an ATP-dependent manner. Cytidine is converted to lysidine, thus changing the amino acid specificity of the tRNA from methionine to isoleucine. The chain is tRNA(Ile)-lysidine synthase from Lactobacillus johnsonii (strain CNCM I-12250 / La1 / NCC 533).